The primary structure comprises 477 residues: Cysteine--tRNA ligase (477 aa).

C28 is a binding site for Zn(2+). Residues 30-40 (PTVYDYPHLGH) carry the 'HIGH' region motif. 3 residues coordinate Zn(2+): C208, H233, and E237. A 'KMSKS' region motif is present at residues 265–269 (KMSKS). K268 is a binding site for ATP.

The protein belongs to the class-I aminoacyl-tRNA synthetase family. Zn(2+) serves as cofactor.

The protein localises to the cytoplasm. It carries out the reaction tRNA(Cys) + L-cysteine + ATP = L-cysteinyl-tRNA(Cys) + AMP + diphosphate. The chain is Cysteine--tRNA ligase from Pyrococcus furiosus (strain ATCC 43587 / DSM 3638 / JCM 8422 / Vc1).